The primary structure comprises 214 residues: Mediator of RNA polymerase II transcription subunit 29 (214 aa).

The tract at residues 1 to 78 is disordered; sequence MMNQMGMHMQ…QQQSQQTEKV (78 aa). Over residues 15–34 the composition is skewed to gly residues; sequence VPGGPGGPVGMAGGPVGGVG. Over residues 44–74 the composition is skewed to low complexity; that stretch reads QMQQQQQVAAQQQQQQQQQQQAQAHQQQSQQ.

Belongs to the Mediator complex subunit 29 family. Component of the Mediator complex.

It localises to the nucleus. In terms of biological role, component of the Mediator complex, a coactivator involved in the regulated transcription of nearly all RNA polymerase II-dependent genes. Mediator functions as a bridge to convey information from gene-specific regulatory proteins to the basal RNA polymerase II transcription machinery. Mediator is recruited to promoters by direct interactions with regulatory proteins and serves as a scaffold for the assembly of a functional preinitiation complex with RNA polymerase II and the general transcription factors. This Aedes aegypti (Yellowfever mosquito) protein is Mediator of RNA polymerase II transcription subunit 29 (ix).